Consider the following 81-residue polypeptide: Photosystem I iron-sulfur center (81 aa).

4Fe-4S ferredoxin-type domains follow at residues 2–31 (AHSV…MIPW) and 39–68 (IASA…VRVY). Cys-11, Cys-14, Cys-17, Cys-21, Cys-48, Cys-51, Cys-54, and Cys-58 together coordinate [4Fe-4S] cluster.

The eukaryotic PSI reaction center is composed of at least 11 subunits. It depends on [4Fe-4S] cluster as a cofactor.

The protein resides in the plastid. Its subcellular location is the chloroplast thylakoid membrane. The enzyme catalyses reduced [plastocyanin] + hnu + oxidized [2Fe-2S]-[ferredoxin] = oxidized [plastocyanin] + reduced [2Fe-2S]-[ferredoxin]. Its function is as follows. Apoprotein for the two 4Fe-4S centers FA and FB of photosystem I (PSI); essential for photochemical activity. FB is the terminal electron acceptor of PSI, donating electrons to ferredoxin. The C-terminus interacts with PsaA/B/D and helps assemble the protein into the PSI complex. Required for binding of PsaD and PsaE to PSI. PSI is a plastocyanin-ferredoxin oxidoreductase, converting photonic excitation into a charge separation, which transfers an electron from the donor P700 chlorophyll pair to the spectroscopically characterized acceptors A0, A1, FX, FA and FB in turn. This is Photosystem I iron-sulfur center from Psilotum nudum (Whisk fern).